The sequence spans 272 residues: 4-hydroxy-tetrahydrodipicolinate reductase (272 aa).

NAD(+) is bound by residues 10–15 (GAGGRM), Glu36, 100–102 (GTT), and 124–127 (SGNM). His157 serves as the catalytic Proton donor/acceptor. His158 contributes to the (S)-2,3,4,5-tetrahydrodipicolinate binding site. Lys161 serves as the catalytic Proton donor. Position 167–168 (167–168 (GT)) interacts with (S)-2,3,4,5-tetrahydrodipicolinate.

This sequence belongs to the DapB family.

It localises to the cytoplasm. It catalyses the reaction (S)-2,3,4,5-tetrahydrodipicolinate + NAD(+) + H2O = (2S,4S)-4-hydroxy-2,3,4,5-tetrahydrodipicolinate + NADH + H(+). The catalysed reaction is (S)-2,3,4,5-tetrahydrodipicolinate + NADP(+) + H2O = (2S,4S)-4-hydroxy-2,3,4,5-tetrahydrodipicolinate + NADPH + H(+). It functions in the pathway amino-acid biosynthesis; L-lysine biosynthesis via DAP pathway; (S)-tetrahydrodipicolinate from L-aspartate: step 4/4. In terms of biological role, catalyzes the conversion of 4-hydroxy-tetrahydrodipicolinate (HTPA) to tetrahydrodipicolinate. The sequence is that of 4-hydroxy-tetrahydrodipicolinate reductase from Bradyrhizobium sp. (strain ORS 278).